A 245-amino-acid chain; its full sequence is MENPQVCECYHGDVEEEKKKKQNNTTSPVHVVLKIDFHCDGCIARIVRLSRRLEGVETVRADPDSNKLTLIGFIMDPVKIAEKLQKKSKKKVELISPKPKKDTKENNEKKANDKTQTVVAVTTVVLKVNCSCDGCIKRIQKAVSTTKGVYQVKMDKEKETVTVMGTMDIKSVTDNLKRKLKKTVQVVPEKKKKKKDKDNAEVNTKVGSPCQPGNGCTHGIGPYRFMEGPMTGFFSEEDQSYCSVM.

In terms of domain architecture, HMA 1 spans 28–92 (PVHVVLKIDF…KLQKKSKKKV (65 aa)). A metal cation is bound by residues cysteine 39 and cysteine 42. Residues 91–113 (KVELISPKPKKDTKENNEKKAND) are disordered. The segment covering 99–113 (PKKDTKENNEKKAND) has biased composition (basic and acidic residues). Positions 121-188 (VTTVVLKVNC…KLKKTVQVVP (68 aa)) constitute an HMA 2 domain. A metal cation contacts are provided by cysteine 132 and cysteine 135. Position 242 is a cysteine methyl ester (cysteine 242). Residue cysteine 242 is the site of S-farnesyl cysteine attachment. Positions 243–245 (SVM) are cleaved as a propeptide — removed in mature form.

It belongs to the HIPP family.

Its function is as follows. Heavy-metal-binding protein. In Arabidopsis thaliana (Mouse-ear cress), this protein is Heavy metal-associated isoprenylated plant protein 1.